Here is a 449-residue protein sequence, read N- to C-terminus: Phosphoglucosamine mutase (449 aa).

Residue serine 100 is the Phosphoserine intermediate of the active site. 4 residues coordinate Mg(2+): serine 100, aspartate 241, aspartate 243, and aspartate 245. Serine 100 is subject to Phosphoserine.

The protein belongs to the phosphohexose mutase family. The cofactor is Mg(2+). Post-translationally, activated by phosphorylation.

It carries out the reaction alpha-D-glucosamine 1-phosphate = D-glucosamine 6-phosphate. Functionally, catalyzes the conversion of glucosamine-6-phosphate to glucosamine-1-phosphate. The protein is Phosphoglucosamine mutase of Clostridium kluyveri (strain NBRC 12016).